We begin with the raw amino-acid sequence, 309 residues long: 4-hydroxy-tetrahydrodipicolinate synthase (309 aa).

A pyruvate-binding site is contributed by Thr-51. The active-site Proton donor/acceptor is the Tyr-140. Lys-168 functions as the Schiff-base intermediate with substrate in the catalytic mechanism. Ile-209 lines the pyruvate pocket.

Belongs to the DapA family. As to quaternary structure, homotetramer; dimer of dimers.

Its subcellular location is the cytoplasm. The catalysed reaction is L-aspartate 4-semialdehyde + pyruvate = (2S,4S)-4-hydroxy-2,3,4,5-tetrahydrodipicolinate + H2O + H(+). The protein operates within amino-acid biosynthesis; L-lysine biosynthesis via DAP pathway; (S)-tetrahydrodipicolinate from L-aspartate: step 3/4. Catalyzes the condensation of (S)-aspartate-beta-semialdehyde [(S)-ASA] and pyruvate to 4-hydroxy-tetrahydrodipicolinate (HTPA). The polypeptide is 4-hydroxy-tetrahydrodipicolinate synthase (Streptococcus uberis (strain ATCC BAA-854 / 0140J)).